Consider the following 186-residue polypeptide: UPF0301 protein Mmc1_0726 (186 aa).

The protein belongs to the UPF0301 (AlgH) family.

This Magnetococcus marinus (strain ATCC BAA-1437 / JCM 17883 / MC-1) protein is UPF0301 protein Mmc1_0726.